The primary structure comprises 294 residues: Foldase protein PrsA 1 (294 aa).

The signal sequence occupies residues 1–21 (MTKLKKVMISVIAATLLLLAG). The N-palmitoyl cysteine moiety is linked to residue C22. A lipid anchor (S-diacylglycerol cysteine) is attached at C22. Residues 135–226 (EPDITVRHIL…YGYHLIQLVK (92 aa)) enclose the PpiC domain.

It belongs to the PrsA family.

Its subcellular location is the cell membrane. The catalysed reaction is [protein]-peptidylproline (omega=180) = [protein]-peptidylproline (omega=0). In terms of biological role, plays a major role in protein secretion by helping the post-translocational extracellular folding of several secreted proteins. This chain is Foldase protein PrsA 1, found in Listeria monocytogenes serotype 4b (strain F2365).